The primary structure comprises 526 residues: ATP synthase subunit alpha (526 aa).

Position 171 to 178 (171 to 178 (GDRQTGKT)) interacts with ATP.

This sequence belongs to the ATPase alpha/beta chains family. As to quaternary structure, F-type ATPases have 2 components, CF(1) - the catalytic core - and CF(0) - the membrane proton channel. CF(1) has five subunits: alpha(3), beta(3), gamma(1), delta(1), epsilon(1). CF(0) has four main subunits: a, b, b' and c.

The protein resides in the cell inner membrane. It catalyses the reaction ATP + H2O + 4 H(+)(in) = ADP + phosphate + 5 H(+)(out). In terms of biological role, produces ATP from ADP in the presence of a proton gradient across the membrane. The alpha chain is a regulatory subunit. This is ATP synthase subunit alpha from Chlorobium phaeobacteroides (strain BS1).